Consider the following 371-residue polypeptide: Neuropeptide Y receptor type 6 (371 aa).

Residues 1 to 31 (MEVLTNQPTPNKTSGKSNNSAFFYFESCQPP) are Extracellular-facing. N-linked (GlcNAc...) asparagine glycosylation is found at Asn-11 and Asn-18. A helical membrane pass occupies residues 32–52 (FLAILLLLIAYTVILIMGIFG). Over 53–82 (NLSLIIIIFKKQREAQNVTNILIANLSLSD) the chain is Cytoplasmic. A helical transmembrane segment spans residues 83 to 103 (ILVCVMCIPFTVIYTLMDHWV). Over 104–111 (FGNTMCKL) the chain is Extracellular. Cys-109 and Cys-196 are joined by a disulfide. The helical transmembrane segment at 112–132 (TSYVQSVSVSVSIFSLVLIAI) threads the bilayer. At 133 to 150 (ERYQLIVNPRGWKPRVAH) the chain is on the cytoplasmic side. Residues 151 to 171 (AYWGIILIWLISLTLSIPLFL) form a helical membrane-spanning segment. The Extracellular portion of the chain corresponds to 172-206 (SYHLTNEPFHNLSLPTDIYTHQVACVEIWPSKLNQ). Asn-182 carries an N-linked (GlcNAc...) asparagine glycan. A helical transmembrane segment spans residues 207–227 (LLFSTSLFMLQYFVPLGFILI). The Cytoplasmic portion of the chain corresponds to 228–263 (CYLKIVLCLRKRTRQVDRRKENKSRLNENKRVNVML). A helical transmembrane segment spans residues 264–284 (ISIVVTFGACWLPLNIFNVIF). The Extracellular segment spans residues 285–297 (DWYHEMLMSCHHD). Residues 298–318 (LVFVVCHLIAMVSTCINPLFY) form a helical membrane-spanning segment. The Cytoplasmic segment spans residues 319-371 (GFLNKNFQKDLMMLIHHCWCGEPQESYENIAMSTMHTDESKGSLKLAHIPTGI). The S-palmitoyl cysteine moiety is linked to residue Cys-336.

This sequence belongs to the G-protein coupled receptor 1 family. In terms of tissue distribution, kidney and discrete regions of the hypothalamus including the suprachiasmatic nucleus, anterior hypothalamus, bed nucleus stria terminalis, and the ventromedial nucleus.

It localises to the cell membrane. Functionally, receptor for neuropeptide Y and peptide YY. The rank order of affinity of this receptor for pancreatic polypeptides is NPY = PYY &gt;= NPY (2-36) = [Leu-31, Pro-34] NPY &gt; NPY (13-36) &gt; PP. The activity of this receptor is mediated by G proteins that inhibits adenylate cyclase activity. The polypeptide is Neuropeptide Y receptor type 6 (Npy6r) (Mus musculus (Mouse)).